Consider the following 197-residue polypeptide: Sec-independent protein translocase protein TatB (197 aa).

A helical transmembrane segment spans residues 1 to 21 (MFDIGFGELLLVMVLGLIVLG). The disordered stretch occupies residues 93–197 (KRGYTETPSP…ASARQPSDSR (105 aa)). Basic and acidic residues-rich tracts occupy residues 104 to 113 (KSDDPKKSGD) and 160 to 169 (NHNDGRHATS). Over residues 180–197 (PEQSQPSAASARQPSDSR) the composition is skewed to low complexity.

Belongs to the TatB family. The Tat system comprises two distinct complexes: a TatABC complex, containing multiple copies of TatA, TatB and TatC subunits, and a separate TatA complex, containing only TatA subunits. Substrates initially bind to the TatABC complex, which probably triggers association of the separate TatA complex to form the active translocon.

Its subcellular location is the cell inner membrane. In terms of biological role, part of the twin-arginine translocation (Tat) system that transports large folded proteins containing a characteristic twin-arginine motif in their signal peptide across membranes. Together with TatC, TatB is part of a receptor directly interacting with Tat signal peptides. TatB may form an oligomeric binding site that transiently accommodates folded Tat precursor proteins before their translocation. The protein is Sec-independent protein translocase protein TatB of Pectobacterium atrosepticum (strain SCRI 1043 / ATCC BAA-672) (Erwinia carotovora subsp. atroseptica).